The chain runs to 223 residues: Endonuclease V (223 aa).

Mg(2+)-binding residues include D35 and D103.

It belongs to the endonuclease V family. Mg(2+) serves as cofactor.

The protein localises to the cytoplasm. It catalyses the reaction Endonucleolytic cleavage at apurinic or apyrimidinic sites to products with a 5'-phosphate.. DNA repair enzyme involved in the repair of deaminated bases. Selectively cleaves double-stranded DNA at the second phosphodiester bond 3' to a deoxyinosine leaving behind the intact lesion on the nicked DNA. This chain is Endonuclease V, found in Shigella flexneri serotype 5b (strain 8401).